The following is a 305-amino-acid chain: Oxygen-dependent coproporphyrinogen-III oxidase (305 aa).

Serine 99 lines the substrate pocket. Residues histidine 103 and histidine 113 each coordinate a divalent metal cation. The active-site Proton donor is the histidine 113. 115–117 contacts substrate; it reads NVR. A divalent metal cation contacts are provided by histidine 152 and histidine 182. Positions 247-282 are important for dimerization; the sequence is YVEFNLVLDRGTLFGLQTGGRTESILMSMPPLARWE. Position 265 to 267 (265 to 267) interacts with substrate; that stretch reads GGR.

Belongs to the aerobic coproporphyrinogen-III oxidase family. As to quaternary structure, homodimer. It depends on a divalent metal cation as a cofactor.

Its subcellular location is the cytoplasm. It carries out the reaction coproporphyrinogen III + O2 + 2 H(+) = protoporphyrinogen IX + 2 CO2 + 2 H2O. Its pathway is porphyrin-containing compound metabolism; protoporphyrin-IX biosynthesis; protoporphyrinogen-IX from coproporphyrinogen-III (O2 route): step 1/1. In terms of biological role, involved in the heme biosynthesis. Catalyzes the aerobic oxidative decarboxylation of propionate groups of rings A and B of coproporphyrinogen-III to yield the vinyl groups in protoporphyrinogen-IX. The protein is Oxygen-dependent coproporphyrinogen-III oxidase of Vibrio cholerae serotype O1 (strain ATCC 39541 / Classical Ogawa 395 / O395).